A 358-amino-acid polypeptide reads, in one-letter code: N-acylethanolamine-hydrolyzing acid amidase (358 aa).

The signal sequence occupies residues 1–26 (MQGTGHPVRPVLELLLLLLLLAGVGG). N-linked (GlcNAc...) asparagine glycans are attached at residues Asn-39 and Asn-108. Cys-127 functions as the Nucleophile in the catalytic mechanism. Asn-310, Asn-334, and Asn-356 each carry an N-linked (GlcNAc...) asparagine glycan.

The protein belongs to the acid ceramidase family. As to quaternary structure, heterodimer of an alpha and a beta subunit, produced by autocatalytic cleavage. N-glycosylated. Tunicamycin treatment causes a reduction in specific activity against N-palmitoylethanolamine. Post-translationally, autoproteolytic cleavage at pH 4.5 gives rise to the alpha and beta subunit. Cleavage gives rise to a conformation change that activates the enzyme. The same catalytic Cys residue mediates the autoproteolytic cleavage and subsequent hydrolysis of lipid substrates.

The protein localises to the lysosome. It localises to the membrane. It catalyses the reaction N-hexadecanoylethanolamine + H2O = ethanolamine + hexadecanoate. The enzyme catalyses an N-(long-chain fatty acyl)ethanolamine + H2O = a long-chain fatty acid + ethanolamine. The catalysed reaction is N-dodecanoylethanolamine + H2O = dodecanoate + ethanolamine. It carries out the reaction N-tetradecanoylethanolamine + H2O = tetradecanoate + ethanolamine. It catalyses the reaction an N-acylsphing-4-enine + H2O = sphing-4-enine + a fatty acid. The enzyme catalyses N-hexadecanoylsphing-4-enine + H2O = sphing-4-enine + hexadecanoate. The catalysed reaction is N-dodecanoylsphing-4-enine + H2O = dodecanoate + sphing-4-enine. The protein operates within lipid metabolism; fatty acid metabolism. Functionally, degrades bioactive fatty acid amides to their corresponding acids, with the following preference: N-palmitoylethanolamine &gt; N-myristoylethanolamine &gt; N-stearoylethanolamine &gt; N-oleoylethanolamine &gt; N-linoleoylethanolamine &gt; N-arachidonoylethanolamine. This is N-acylethanolamine-hydrolyzing acid amidase from Oryctolagus cuniculus (Rabbit).